The primary structure comprises 186 residues: Probable calcium-binding protein CML25 (186 aa).

Residues 1–17 are compositionally biased toward low complexity; it reads MFNKNQGSNGGSSSNVG. Residues 1 to 23 form a disordered region; it reads MFNKNQGSNGGSSSNVGIGADSP. 4 consecutive EF-hand domains span residues 33–68, 69–104, 106–141, and 142–177; these read TEIR…LGHE, VPEE…GMDQ, DVLE…LGDE, and CSIA…GSRR. Asp46, Asn48, Asp50, Lys52, and Glu57 together coordinate Ca(2+). Residues Asp119, Asp121, Asn123, Ser125, Glu130, Asp155, Asp157, Asp159, Thr161, and Glu166 each coordinate Ca(2+).

Functionally, potential calcium sensor. The chain is Probable calcium-binding protein CML25 (CML25) from Arabidopsis thaliana (Mouse-ear cress).